Consider the following 319-residue polypeptide: HTH-type transcriptional regulator YidZ (319 aa).

The 58-residue stretch at 8-65 folds into the HTH lysR-type domain; sequence LDLNLLLCLQLLMQERSVTKAAKRMNVTPSAVSKSLAKLRAWFDDPLFVNSPLGLSPT. Positions 25 to 44 form a DNA-binding region, H-T-H motif; that stretch reads VTKAAKRMNVTPSAVSKSLA.

It belongs to the LysR transcriptional regulatory family.

Involved in anaerobic NO protection. The sequence is that of HTH-type transcriptional regulator YidZ from Escherichia coli O17:K52:H18 (strain UMN026 / ExPEC).